The chain runs to 240 residues: Ribosomal RNA large subunit methyltransferase E (240 aa).

Residues 1 to 20 (MSKAGGNKGGSRTGGRGGAG) show a composition bias toward gly residues. Positions 1–40 (MSKAGGNKGGSRTGGRGGAGSSNLHVRVKKKAGTTKESSR) are disordered. The S-adenosyl-L-methionine site is built by Gly92, Trp94, Asp115, Asp131, and Asp155. Lys195 acts as the Proton acceptor in catalysis.

This sequence belongs to the class I-like SAM-binding methyltransferase superfamily. RNA methyltransferase RlmE family.

The protein localises to the cytoplasm. The catalysed reaction is uridine(2552) in 23S rRNA + S-adenosyl-L-methionine = 2'-O-methyluridine(2552) in 23S rRNA + S-adenosyl-L-homocysteine + H(+). Specifically methylates the uridine in position 2552 of 23S rRNA at the 2'-O position of the ribose in the fully assembled 50S ribosomal subunit. This chain is Ribosomal RNA large subunit methyltransferase E, found in Brucella ovis (strain ATCC 25840 / 63/290 / NCTC 10512).